Here is a 76-residue protein sequence, read N- to C-terminus: Acyl carrier protein (76 aa).

The Carrier domain occupies 2-76; the sequence is KDNFTRLQSI…QDVLNYLERN (75 aa). At serine 37 the chain carries O-(pantetheine 4'-phosphoryl)serine.

It belongs to the acyl carrier protein (ACP) family. 4'-phosphopantetheine is transferred from CoA to a specific serine of apo-ACP by AcpS. This modification is essential for activity because fatty acids are bound in thioester linkage to the sulfhydryl of the prosthetic group.

It localises to the plastid. The protein localises to the chloroplast. It functions in the pathway lipid metabolism; fatty acid biosynthesis. Carrier of the growing fatty acid chain in fatty acid biosynthesis. In Phaeodactylum tricornutum (strain CCAP 1055/1), this protein is Acyl carrier protein.